We begin with the raw amino-acid sequence, 415 residues long: Imidazolonepropionase (415 aa).

H76 and H78 together coordinate Fe(3+). Positions 76 and 78 each coordinate Zn(2+). Positions 85, 148, and 181 each coordinate 4-imidazolone-5-propanoate. Residue Y148 participates in N-formimidoyl-L-glutamate binding. H246 provides a ligand contact to Fe(3+). H246 serves as a coordination point for Zn(2+). E249 contributes to the 4-imidazolone-5-propanoate binding site. D320 contributes to the Fe(3+) binding site. D320 contributes to the Zn(2+) binding site. N-formimidoyl-L-glutamate is bound by residues N322 and G324. Residue T325 participates in 4-imidazolone-5-propanoate binding.

The protein belongs to the metallo-dependent hydrolases superfamily. HutI family. Zn(2+) serves as cofactor. Fe(3+) is required as a cofactor.

It is found in the cytoplasm. The enzyme catalyses 4-imidazolone-5-propanoate + H2O = N-formimidoyl-L-glutamate. It participates in amino-acid degradation; L-histidine degradation into L-glutamate; N-formimidoyl-L-glutamate from L-histidine: step 3/3. Catalyzes the hydrolytic cleavage of the carbon-nitrogen bond in imidazolone-5-propanoate to yield N-formimidoyl-L-glutamate. It is the third step in the universal histidine degradation pathway. The polypeptide is Imidazolonepropionase (Thermoanaerobacter pseudethanolicus (strain ATCC 33223 / 39E) (Clostridium thermohydrosulfuricum)).